The following is a 234-amino-acid chain: Large ribosomal subunit protein uL1 (234 aa).

This sequence belongs to the universal ribosomal protein uL1 family. In terms of assembly, part of the 50S ribosomal subunit.

Binds directly to 23S rRNA. The L1 stalk is quite mobile in the ribosome, and is involved in E site tRNA release. In terms of biological role, protein L1 is also a translational repressor protein, it controls the translation of the L11 operon by binding to its mRNA. The sequence is that of Large ribosomal subunit protein uL1 from Anaeromyxobacter sp. (strain Fw109-5).